We begin with the raw amino-acid sequence, 284 residues long: Polyamine aminopropyltransferase (284 aa).

The 236-residue stretch at E2 to K237 folds into the PABS domain. Q31 is an S-methyl-5'-thioadenosine binding site. Spermidine contacts are provided by H62 and D86. S-methyl-5'-thioadenosine-binding positions include E106 and D137–G138. The active-site Proton acceptor is the D155. D155 to D158 is a spermidine binding site. An S-methyl-5'-thioadenosine-binding site is contributed by P162.

Belongs to the spermidine/spermine synthase family. As to quaternary structure, homodimer or homotetramer.

The protein localises to the cytoplasm. The enzyme catalyses S-adenosyl 3-(methylsulfanyl)propylamine + putrescine = S-methyl-5'-thioadenosine + spermidine + H(+). The protein operates within amine and polyamine biosynthesis; spermidine biosynthesis; spermidine from putrescine: step 1/1. Its function is as follows. Catalyzes the irreversible transfer of a propylamine group from the amino donor S-adenosylmethioninamine (decarboxy-AdoMet) to putrescine (1,4-diaminobutane) to yield spermidine. The chain is Polyamine aminopropyltransferase from Clostridium beijerinckii (strain ATCC 51743 / NCIMB 8052) (Clostridium acetobutylicum).